A 65-amino-acid chain; its full sequence is Beta-mammal toxin Tma1 (65 aa).

In terms of domain architecture, LCN-type CS-alpha/beta spans 2–64; it reads KEGYLVGNDG…TWNSAKNRCG (63 aa). 4 disulfide bridges follow: cysteine 12-cysteine 63, cysteine 16-cysteine 38, cysteine 24-cysteine 44, and cysteine 28-cysteine 46.

It belongs to the long (4 C-C) scorpion toxin superfamily. Sodium channel inhibitor family. In terms of tissue distribution, expressed by the venom gland.

It is found in the secreted. Functionally, beta toxins bind voltage-independently at site-4 of sodium channels (Nav) and shift the voltage of activation toward more negative potentials thereby affecting sodium channel activation and promoting spontaneous and repetitive firing. This toxin acts on human Nav1.4/SCN4A and Nav1.6/SCN8A voltage-gated sodium channels. The polypeptide is Beta-mammal toxin Tma1 (Tityus macrochirus (Scorpion)).